Here is a 473-residue protein sequence, read N- to C-terminus: H(+)/Cl(-) exchange transporter ClcA (473 aa).

Residues 1-32 lie on the Cytoplasmic side of the membrane; it reads MKTDTPSLETPQAARLRRRQLIRQLLERDKTP. A helical membrane pass occupies residues 33–69; sequence LAILFMAAVVGTLVGLAAVAFDKGVAWLQNQRMGALV. Residues 70–76 lie on the Periplasmic side of the membrane; it reads HTADNYP. Residues 77–100 traverse the membrane as a helical segment; sequence LLLTVAFLCSAVLAMFGYFLVRKY. A Selectivity filter part_1 motif is present at residues 106–110; the sequence is GSGIP. Chloride is bound at residue S107. An intramembrane region (helical) is located at residues 109-116; the sequence is IPEIEGAL. Topologically, residues 117-123 are cytoplasmic; sequence EDQRPVR. Transmembrane regions (helical) follow at residues 124–141 and 148–166; these read WWRV…TLGG and EGPT…LDIF. A Selectivity filter part_2 motif is present at residues 146–150; that stretch reads GREGP. At 167–176 the chain is on the cytoplasmic side; the sequence is RLKGDEARHT. 2 consecutive intramembrane regions (helical) follow at residues 177–189 and 193–201; these read LLAT…LAAA and PLAGILFII. The Cytoplasmic segment spans residues 202 to 214; that stretch reads EEMRPQFRYTLIS. The helical transmembrane segment at 215–232 threads the bilayer; that stretch reads IKAVFIGVIMSTIMYRIF. At 233–252 the chain is on the periplasmic side; the sequence is NHEVALIDVGKLSDAPLNTL. A helical membrane pass occupies residues 253-281; that stretch reads WLYLILGIIFGIFGPIFNKWVLGMQDLLH. The Cytoplasmic portion of the chain corresponds to 282–287; the sequence is RVHGGN. A helical transmembrane segment spans residues 288 to 309; it reads ITKWVLMGGAIGGLCGLLGFVA. The Periplasmic segment spans residues 310 to 329; sequence PATSGGGFNLIPIATAGNFS. 2 consecutive transmembrane segments (helical) span residues 330 to 349 and 355 to 376; these read MGML…LCFS and GIFA…MVAV. A Selectivity filter part_3 motif is present at residues 355-359; sequence GIFAP. Positions 356 and 357 each coordinate chloride. Over 377–386 the chain is Periplasmic; that stretch reads ELFPQYHLEA. The segment at residues 387-401 is an intramembrane region (helical); the sequence is GTFAIAGMGALLAAS. An intramembrane region (note=Loop between two helices) is located at residues 402–404; it reads IRA. The segment at residues 405 to 416 is an intramembrane region (helical); it reads PLTGIILVLEMT. The segment at residues 417–421 is an intramembrane region (note=Loop between two helices); it reads DNYQL. A helical membrane pass occupies residues 422-438; sequence ILPMIITGLGATLLAQF. Over 439-473 the chain is Cytoplasmic; it reads TGGKPLYSAILARTLAKQEAEQLARSKAASASENT. Y445 contributes to the chloride binding site.

It belongs to the chloride channel (TC 2.A.49) family. ClcA subfamily. Homodimer.

It localises to the cell inner membrane. It catalyses the reaction 2 chloride(in) + H(+)(out) = 2 chloride(out) + H(+)(in). Functionally, proton-coupled chloride transporter. Functions as antiport system and exchanges two chloride ions for 1 proton. Probably acts as an electrical shunt for an outwardly-directed proton pump that is linked to amino acid decarboxylation, as part of the extreme acid resistance (XAR) response. The sequence is that of H(+)/Cl(-) exchange transporter ClcA from Escherichia coli O139:H28 (strain E24377A / ETEC).